A 589-amino-acid polypeptide reads, in one-letter code: EZH inhibitory protein (589 aa).

Disordered regions lie at residues 1 to 46 (MASS…LRLR), 61 to 548 (AGED…SGPN), and 561 to 589 (LDSSSPRVPGEEIEAAPHTREEEDKKCRG). 2 stretches are compositionally biased toward gly residues: residues 29–38 (GPRGRGGPSG) and 105–114 (PKGGGKADQG). Over residues 147–161 (GAAGPPLPGARGSPA) the composition is skewed to low complexity. Residues 193–204 (LRSSTSQGSGST) are compositionally biased toward polar residues. Composition is skewed to low complexity over residues 299–308 (RSSASAVSPE), 325–334 (RSSASVVSPE), 351–360 (RSSASVVSPE), and 374–390 (PRATPRVPVAPSSTTRS). S306 is subject to Phosphoserine. Residues 426–437 (MRLDLQVDREPE) are compositionally biased toward basic and acidic residues. The segment covering 438–449 (SEAEQEEQELES) has biased composition (acidic residues). Residues 450-465 (EPGPSSRPQASRSSSR) show a composition bias toward low complexity. A sufficient for interaction with EZH2 region spans residues 482-490 (RRPVRMRAS). A necessary and sufficient for inhibition of PRC2/EED-EZH1 and PRC2/EED-EZH2 complex activity region spans residues 484 to 503 (PVRMRASSPSPPGRLYPLPK). Over residues 509-547 (VHSPSSSSSESSSVSSSHSPLNKAPDPGSSPPLSSLSGP) the composition is skewed to low complexity. The span at 575-589 (AAPHTREEEDKKCRG) shows a compositional bias: basic and acidic residues.

In terms of assembly, interacts with PRC2/EED-EZH1 complex member EZH1 and with PRC2/EED-EZH2 complex member EZH2; the interaction blocks EZH1/EZH2 methyltransferase activity. Interacts (via C-terminus) with SUZ12 which is a member of the PRC2/EED-EZH1 and PRC2/EED-EZH2 complexes. In terms of tissue distribution, highly expressed in ovary with lower expression in testis and very low levels in other tissues tested including prostate, brain, kidney, spleen and liver. During spermatogenesis, expressed mainly in spermatogonia with very low expression in spermatocytes I and II.

It is found in the nucleus. It localises to the cytoplasm. Its function is as follows. Inhibits PRC2/EED-EZH1 and PRC2/EED-EZH2 complex function by inhibiting EZH1/EZH2 methyltransferase activity, thereby causing down-regulation of histone H3 trimethylation at 'Lys-27' (H3K27me3). Probably inhibits methyltransferase activity by limiting the stimulatory effect of cofactors such as AEBP2 and JARID2. Inhibits H3K27me3 deposition during spermatogenesis and oogenesis. In Mus musculus (Mouse), this protein is EZH inhibitory protein.